The sequence spans 438 residues: Glutamate--tRNA ligase 2 (438 aa).

The 'HIGH' region signature appears at 6 to 16 (PSPTGDMHTGN). A 'KMSKS' region motif is present at residues 231-235 (KMSKR). Position 234 (K234) interacts with ATP.

Belongs to the class-I aminoacyl-tRNA synthetase family. Glutamate--tRNA ligase type 1 subfamily. As to quaternary structure, monomer.

The protein resides in the cytoplasm. The enzyme catalyses tRNA(Glu) + L-glutamate + ATP = L-glutamyl-tRNA(Glu) + AMP + diphosphate. Functionally, catalyzes the attachment of glutamate to tRNA(Glu) in a two-step reaction: glutamate is first activated by ATP to form Glu-AMP and then transferred to the acceptor end of tRNA(Glu). The sequence is that of Glutamate--tRNA ligase 2 from Wolinella succinogenes (strain ATCC 29543 / DSM 1740 / CCUG 13145 / JCM 31913 / LMG 7466 / NCTC 11488 / FDC 602W) (Vibrio succinogenes).